The chain runs to 85 residues: Large ribosomal subunit protein bL27 (85 aa).

Over residues 1 to 10 (MAQKKGGGST) the composition is skewed to gly residues. Positions 1–20 (MAQKKGGGSTRNGRDSQPKM) are disordered.

The protein belongs to the bacterial ribosomal protein bL27 family.

This is Large ribosomal subunit protein bL27 from Methylibium petroleiphilum (strain ATCC BAA-1232 / LMG 22953 / PM1).